The following is a 272-amino-acid chain: Phosphatidylglycerol--prolipoprotein diacylglyceryl transferase (272 aa).

4 consecutive transmembrane segments (helical) span residues 15–35 (LGPL…LVLF), 53–73 (AFAV…WHVV), 90–110 (IWEG…CFFV), and 117–137 (VPPF…LCFA). Arg138 contributes to the a 1,2-diacyl-sn-glycero-3-phospho-(1'-sn-glycerol) binding site. A run of 3 helical transmembrane segments spans residues 174-194 (FHPI…ILLV), 199-219 (VFVK…VLYG), and 237-257 (FGLD…VLIA).

Belongs to the Lgt family.

It localises to the cell membrane. It carries out the reaction L-cysteinyl-[prolipoprotein] + a 1,2-diacyl-sn-glycero-3-phospho-(1'-sn-glycerol) = an S-1,2-diacyl-sn-glyceryl-L-cysteinyl-[prolipoprotein] + sn-glycerol 1-phosphate + H(+). It functions in the pathway protein modification; lipoprotein biosynthesis (diacylglyceryl transfer). Catalyzes the transfer of the diacylglyceryl group from phosphatidylglycerol to the sulfhydryl group of the N-terminal cysteine of a prolipoprotein, the first step in the formation of mature lipoproteins. The sequence is that of Phosphatidylglycerol--prolipoprotein diacylglyceryl transferase from Tropheryma whipplei (strain Twist) (Whipple's bacillus).